We begin with the raw amino-acid sequence, 244 residues long: Phosphoadenosine 5'-phosphosulfate reductase (244 aa).

Residue cysteine 239 is the Nucleophile; cysteine thiosulfonate intermediate of the active site.

Belongs to the PAPS reductase family. CysH subfamily.

The protein localises to the cytoplasm. It carries out the reaction [thioredoxin]-disulfide + sulfite + adenosine 3',5'-bisphosphate + 2 H(+) = [thioredoxin]-dithiol + 3'-phosphoadenylyl sulfate. It functions in the pathway sulfur metabolism; hydrogen sulfide biosynthesis; sulfite from sulfate: step 3/3. Catalyzes the formation of sulfite from phosphoadenosine 5'-phosphosulfate (PAPS) using thioredoxin as an electron donor. This Salmonella agona (strain SL483) protein is Phosphoadenosine 5'-phosphosulfate reductase.